The primary structure comprises 1159 residues: WASH complex subunit 5 (1159 aa).

Belongs to the strumpellin family. In terms of assembly, component of the WASH complex.

The protein resides in the early endosome. Acts at least in part as component of the WASH complex which seems to regulate washc1 nucleation-promoting factor (NPF) activity and is required for its membrane targeting during endosomal sorting. The polypeptide is WASH complex subunit 5 (Danio rerio (Zebrafish)).